A 235-amino-acid polypeptide reads, in one-letter code: Lipoprotein-releasing system ATP-binding protein LolD (235 aa).

The region spanning 13-235 (LCCSNIIKRY…SNGMLKISTI (223 aa)) is the ABC transporter domain. 49-56 (GASGSGKS) contributes to the ATP binding site.

The protein belongs to the ABC transporter superfamily. Lipoprotein translocase (TC 3.A.1.125) family. The complex is composed of two ATP-binding proteins (LolD) and two transmembrane proteins (LolC and LolE).

Its subcellular location is the cell inner membrane. Part of the ABC transporter complex LolCDE involved in the translocation of mature outer membrane-directed lipoproteins, from the inner membrane to the periplasmic chaperone, LolA. Responsible for the formation of the LolA-lipoprotein complex in an ATP-dependent manner. The polypeptide is Lipoprotein-releasing system ATP-binding protein LolD (Blochmanniella floridana).